The primary structure comprises 477 residues: Glycogen synthase (477 aa).

Residue K15 participates in ADP-alpha-D-glucose binding.

This sequence belongs to the glycosyltransferase 1 family. Bacterial/plant glycogen synthase subfamily.

It catalyses the reaction [(1-&gt;4)-alpha-D-glucosyl](n) + ADP-alpha-D-glucose = [(1-&gt;4)-alpha-D-glucosyl](n+1) + ADP + H(+). It participates in glycan biosynthesis; glycogen biosynthesis. In terms of biological role, synthesizes alpha-1,4-glucan chains using ADP-glucose. The chain is Glycogen synthase from Streptococcus pneumoniae serotype 2 (strain D39 / NCTC 7466).